The following is a 126-amino-acid chain: Small ribosomal subunit protein uS12 (126 aa).

The disordered stretch occupies residues 1–23; the sequence is MPTISQLVRKGRKTVASKSTAPA. Asp-89 bears the 3-methylthioaspartic acid mark.

The protein belongs to the universal ribosomal protein uS12 family. In terms of assembly, part of the 30S ribosomal subunit. Contacts proteins S8 and S17. May interact with IF1 in the 30S initiation complex.

Functionally, with S4 and S5 plays an important role in translational accuracy. In terms of biological role, interacts with and stabilizes bases of the 16S rRNA that are involved in tRNA selection in the A site and with the mRNA backbone. Located at the interface of the 30S and 50S subunits, it traverses the body of the 30S subunit contacting proteins on the other side and probably holding the rRNA structure together. The combined cluster of proteins S8, S12 and S17 appears to hold together the shoulder and platform of the 30S subunit. The sequence is that of Small ribosomal subunit protein uS12 from Clostridium perfringens (strain ATCC 13124 / DSM 756 / JCM 1290 / NCIMB 6125 / NCTC 8237 / Type A).